A 255-amino-acid chain; its full sequence is Triosephosphate isomerase (255 aa).

A substrate-binding site is contributed by 9–11 (NWK). Catalysis depends on histidine 95, which acts as the Electrophile. Catalysis depends on glutamate 167, which acts as the Proton acceptor. Residues glycine 173, serine 212, and 233 to 234 (GG) each bind substrate.

This sequence belongs to the triosephosphate isomerase family. Homodimer.

The protein localises to the cytoplasm. The catalysed reaction is D-glyceraldehyde 3-phosphate = dihydroxyacetone phosphate. The protein operates within carbohydrate biosynthesis; gluconeogenesis. Its pathway is carbohydrate degradation; glycolysis; D-glyceraldehyde 3-phosphate from glycerone phosphate: step 1/1. Involved in the gluconeogenesis. Catalyzes stereospecifically the conversion of dihydroxyacetone phosphate (DHAP) to D-glyceraldehyde-3-phosphate (G3P). The sequence is that of Triosephosphate isomerase from Sodalis glossinidius (strain morsitans).